Reading from the N-terminus, the 465-residue chain is Indoleacetamide hydrolase (465 aa).

Residues M1–R40 are disordered. Over residues R9–C39 the composition is skewed to basic and acidic residues. The Charge relay system role is filled by S149. Residue S173 is the Acyl-ester intermediate of the active site.

The protein belongs to the amidase family.

Its pathway is plant hormone metabolism; auxin biosynthesis. Hydrolyzes indole-3-acetamide (IAM) into indole-3-acetic acid (IAA). The protein is Indoleacetamide hydrolase (bam) of Bradyrhizobium japonicum.